The chain runs to 177 residues: ATP-dependent protease subunit HslV (177 aa).

Threonine 7 is an active-site residue. 3 residues coordinate Na(+): glycine 162, cysteine 165, and threonine 168.

This sequence belongs to the peptidase T1B family. HslV subfamily. A double ring-shaped homohexamer of HslV is capped on each side by a ring-shaped HslU homohexamer. The assembly of the HslU/HslV complex is dependent on binding of ATP.

The protein resides in the cytoplasm. It catalyses the reaction ATP-dependent cleavage of peptide bonds with broad specificity.. Allosterically activated by HslU binding. In terms of biological role, protease subunit of a proteasome-like degradation complex believed to be a general protein degrading machinery. The chain is ATP-dependent protease subunit HslV from Persephonella marina (strain DSM 14350 / EX-H1).